The primary structure comprises 709 residues: Solute carrier organic anion transporter family member 2B1 (709 aa).

Residues 1–38 (MGPRIGPAGEVPQVPDKETKATMGTENTPGGKASPDPQ) are disordered. Topologically, residues 1 to 49 (MGPRIGPAGEVPQVPDKETKATMGTENTPGGKASPDPQDVRPSVFHNIK) are cytoplasmic. S34 is modified (phosphoserine). A helical transmembrane segment spans residues 50 to 69 (LFVLCHSLLQLAQLMISGYL). The tract at residues 51–69 (FVLCHSLLQLAQLMISGYL) is required for E1S and taurocholate transport; required for transporter stability. Residues 70–88 (KSSISTVEKRFGLSSQTSG) lie on the Extracellular side of the membrane. Residues 89 to 109 (LLASFNEVGNTALIVFVSYFG) traverse the membrane as a helical segment. Topologically, residues 110 to 115 (SRVHRP) are cytoplasmic. Residues 116 to 140 (RMIGYGAILVALAGLLMTLPHFISE) traverse the membrane as a helical segment. The Extracellular portion of the chain corresponds to 141-185 (PYRYDNTSPEDMPQDFKASLCLPTTSAPASAPSNGNCSSYTETQH). An N-linked (GlcNAc...) asparagine glycan is attached at N176. Residues 186 to 215 (LSVVGIMFVAQTLLGVGGVPIQPFGISYID) form a helical membrane-spanning segment. The Cytoplasmic segment spans residues 216–234 (DFAHNSNSPLYLGILFAVT). The chain crosses the membrane as a helical span at residues 235 to 255 (MMGPGLAFGLGSLMLRLYVDI). The Extracellular portion of the chain corresponds to 256–273 (NQMPEGGISLTIKDPRWV). Residues 274 to 298 (GAWWLGFLIAAGAVALAAIPYFFFP) traverse the membrane as a helical segment. Residues 299–366 (KEMPKEKREL…IKVFPRVLLQ (68 aa)) are Cytoplasmic-facing. T318 is subject to Phosphothreonine. The tract at residues 319 to 342 (DSPARKGKDSPSKQSPGESTKKQD) is disordered. S320 is subject to Phosphoserine. The chain crosses the membrane as a helical span at residues 367–388 (TLRHPIFLLVVLSQVCLSSMAA). Residues 389–408 (GMATFLPKFLERQFSITASY) are Extracellular-facing. A helical membrane pass occupies residues 409 to 432 (ANLLIGCLSFPSVIVGIVVGGVLV). The Cytoplasmic portion of the chain corresponds to 433–436 (KRLH). The helical transmembrane segment at 437–460 (LGPVGCGALCLLGMLLCLFFSLPL) threads the bilayer. The Extracellular segment spans residues 461-564 (FFIGCSSHQI…STCSHLVVPF (104 aa)). The Kazal-like domain occupies 483-543 (LELSPSCMEA…VFYTNCSCVV (61 aa)). 3 disulfide bridges follow: C489/C520, C495/C516, and C504/C541. N-linked (GlcNAc...) asparagine glycosylation is present at N538. Residues 565–587 (LLLVSLGSALACLTHTPSFMLIL) traverse the membrane as a helical segment. The Cytoplasmic portion of the chain corresponds to 588–596 (RGVKKEDKT). The chain crosses the membrane as a helical span at residues 597–622 (LAVGIQFMFLRILAWMPSPVIHGSAI). The Extracellular segment spans residues 623-655 (DTTCVHWALSCGRRAVCRYYNNDLLRNRFIGLQ). A helical transmembrane segment spans residues 656-673 (FFFKTGSVICFALVLAVL). Residues 674-709 (RQQDKEARTKESRSSPAVEQQLLVSGPGKKPEDSRV) are Cytoplasmic-facing. Residues 679–709 (EARTKESRSSPAVEQQLLVSGPGKKPEDSRV) form a disordered region.

The protein belongs to the organo anion transporter (TC 2.A.60) family. Strongly expressed in the liver, at the sinusoidal membrane of the hepatocytes. Expressed in the kidney. Expressed in placental trophoblasts and syncytiotrophoblast. Expressed in the small intestine. Expressed in the blood-brain barrier, in endothelial cells of brain capillaries. Expressed in the retina, in the inner nuclear layer and the inner plexiform layer. Expressed in skelettal muscles. In testis, primarily localized to the basal membrane of Sertoli cells and weakly expressed within the tubules. Also expressed in pancreas, lung, heart, colon, ovary and spleen. Expressed in fetal brain, heart, kidney, liver, lung, skeletal muscle, spleen and pancreas. In terms of tissue distribution, highest expression in brain. Predominant isoform compared to isoform 3 in small intestine duodenum, kidney, placenta, and skeletal muscle. As to expression, predominant isoform compared to isoform 1 in liver. Also expressed in small intestine duodenum, kidney, brain, placenta, and skeletal muscle.

It is found in the cell membrane. The protein localises to the basal cell membrane. Its subcellular location is the basolateral cell membrane. The protein resides in the apical cell membrane. The catalysed reaction is dehydroepiandrosterone 3-sulfate(out) = dehydroepiandrosterone 3-sulfate(in). The enzyme catalyses estrone 3-sulfate(out) = estrone 3-sulfate(in). It catalyses the reaction estrone 3-sulfate(out) + hydrogencarbonate(in) = estrone 3-sulfate(in) + hydrogencarbonate(out). It carries out the reaction taurocholate(out) = taurocholate(in). The catalysed reaction is coproporphyrin III(out) = coproporphyrin III(in). The enzyme catalyses substance P(out) = substance P(in). It catalyses the reaction pregnenolone sulfate(out) = pregnenolone sulfate(in). It carries out the reaction prostaglandin E2(out) = prostaglandin E2(in). The catalysed reaction is prostaglandin D2(out) = prostaglandin D2(in). The enzyme catalyses L-thyroxine(out) = L-thyroxine(in). Its activity is regulated as follows. E1S, DHEA-S and PregS transports are regulated by steroid hormones. In the case of testosterone, transport of E1S and DHEA-S was inhibited, whereas progesterone stimulated E1S, DHEA-S and PregS uptake. Progesterone stimulates high-affinity uptake of E1S whereas it inhibits low-affinity uptake of E1S. Progesterone doesn't affect the uptake of PGE2. Functionally, mediates the Na(+)-independent transport of steroid sulfate conjugates and other specific organic anions. Responsible for the transport of estrone 3-sulfate (E1S) through the basal membrane of syncytiotrophoblast, highlighting a potential role in the placental absorption of fetal-derived sulfated steroids including the steroid hormone precursor dehydroepiandrosterone sulfate (DHEA-S). Also facilitates the uptake of sulfated steroids at the basal/sinusoidal membrane of hepatocytes, therefore accounting for the major part of organic anions clearance of liver. Mediates the intestinal uptake of sulfated steroids. Mediates the uptake of the neurosteroids DHEA-S and pregnenolone sulfate (PregS) into the endothelial cells of the blood-brain barrier as the first step to enter the brain. Also plays a role in the reuptake of neuropeptides such as substance P/TAC1 and vasoactive intestinal peptide/VIP released from retinal neurons. May act as a heme transporter that promotes cellular iron availability via heme oxygenase/HMOX2 and independently of TFRC. Also transports heme by-product coproporphyrin III (CPIII), and may be involved in their hepatic disposition. Mediates the uptake of other substrates such as prostaglandins D2 (PGD2), E1 (PGE1) and E2 (PGE2), taurocholate, L-thyroxine, leukotriene C4 and thromboxane B2. May contribute to regulate the transport of organic compounds in testis across the blood-testis-barrier. Shows a pH-sensitive substrate specificity which may be ascribed to the protonation state of the binding site and leads to a stimulation of substrate transport in an acidic microenvironment. The exact transport mechanism has not been yet deciphered but most likely involves an anion exchange, coupling the cellular uptake of organic substrate with the efflux of an anionic compound. Hydrogencarbonate/HCO3(-) acts as a probable counteranion that exchanges for organic anions. Cytoplasmic glutamate may also act as counteranion in the placenta. An inwardly directed proton gradient has also been proposed as the driving force of E1S uptake with a (H(+):E1S) stoichiometry of (1:1). In terms of biological role, has estrone 3-sulfate (E1S) transport activity comparable with the full-length isoform 1. The protein is Solute carrier organic anion transporter family member 2B1 of Homo sapiens (Human).